The sequence spans 443 residues: Glutamate-rich protein 1 (443 aa).

An N6-acetyllysine modification is found at K12. The tract at residues 15 to 333 is disordered; sequence QRLFPPVPSG…DASEEDDTIT (319 aa). Basic and acidic residues predominate over residues 42 to 54; it reads VTSEKVSQKHAEP. Residues 87 to 97 show a composition bias toward polar residues; the sequence is SCGSPENASSG. 2 stretches are compositionally biased toward basic residues: residues 109–124 and 159–176; these read PKRR…KKFK and KNKK…RKKA. Positions 205-226 are enriched in acidic residues; sequence ACEEDGVDTSEEDPTLAGEEDV. Phosphoserine is present on residues S238 and S254. Residues 250-266 show a composition bias toward acidic residues; the sequence is GADASEEDPTPAGEEDV. Residue T277 is modified to Phosphothreonine. Basic and acidic residues predominate over residues 281–296; it reads DLTRAGEEDGKDTREE. Over residues 297–332 the composition is skewed to acidic residues; the sequence is DGADASEEDPTWAGEEEGADSGEEDGADASEEDDTI.

In Homo sapiens (Human), this protein is Glutamate-rich protein 1 (ERICH1).